The primary structure comprises 490 residues: Myocilin (490 aa).

The N-terminal stretch at 1-18 is a signal peptide; it reads MPAVQLLLLAGLVWGAGA. Positions 55–170 form a coiled coil; sequence SAIQDLQRDS…QEVARLARGQ (116 aa). Positions 168–187 are disordered; sequence RGQCPQARDTSQDVPAGSRE. The Olfactomedin-like domain occupies 230 to 489; that stretch reads GCGELVWVGQ…MVTYDIKLSK (260 aa). A disulfide bridge links cysteine 231 with cysteine 419. The Ca(2+) site is built by aspartate 366, asparagine 414, alanine 415, isoleucine 463, and aspartate 464. Positions 488-490 match the Microbody targeting signal motif; that stretch reads SKI.

Homodimer (via N-terminus). Can also form higher oligomers. Interacts with OLFM3, FN1, NRCAM, GLDN and NFASC. Interacts (via N-terminus) with MYL2. Interacts with SFRP1, FRZB, FZD7, FZD10, FZD1 and WIF1; regulates Wnt signaling. Interacts with SNTA1; regulates muscle hypertrophy. Interacts with ERBB2 and ERBB3; activates ERBB2-ERBB3 signaling pathway. Interacts with SNCG; affects its secretion and its aggregation. Palmitoylated. Post-translationally, glycosylated. In terms of processing, undergoes a calcium-dependent proteolytic cleavage at Arg-212 by CAPN2 in the endoplasmic reticulum. The result is the production of two fragments, one of 35 kDa containing the C-terminal olfactomedin-like domain, and another of 20 kDa containing the N-terminal leucine zipper-like domain. Detected in eye aqueous humor (at protein level).

The protein resides in the secreted. The protein localises to the golgi apparatus. It localises to the cytoplasmic vesicle. It is found in the extracellular space. Its subcellular location is the extracellular matrix. The protein resides in the extracellular exosome. The protein localises to the mitochondrion. It localises to the mitochondrion intermembrane space. It is found in the mitochondrion inner membrane. Its subcellular location is the mitochondrion outer membrane. The protein resides in the rough endoplasmic reticulum. The protein localises to the cell projection. It localises to the cilium. It is found in the endoplasmic reticulum. Functionally, secreted glycoprotein regulating the activation of different signaling pathways in adjacent cells to control different processes including cell adhesion, cell-matrix adhesion, cytoskeleton organization and cell migration. Promotes substrate adhesion, spreading and formation of focal contacts. Negatively regulates cell-matrix adhesion and stress fiber assembly through Rho protein signal transduction. Modulates the organization of actin cytoskeleton by stimulating the formation of stress fibers through interactions with components of Wnt signaling pathways. Promotes cell migration through activation of PTK2 and the downstream phosphatidylinositol 3-kinase signaling. Plays a role in bone formation and promotes osteoblast differentiation in a dose-dependent manner through mitogen-activated protein kinase signaling. Mediates myelination in the peripheral nervous system through ERBB2/ERBB3 signaling. Plays a role as a regulator of muscle hypertrophy through the components of dystrophin-associated protein complex. Involved in positive regulation of mitochondrial depolarization. Plays a role in neurite outgrowth. May participate in the obstruction of fluid outflow in the trabecular meshwork. This is Myocilin from Oryctolagus cuniculus (Rabbit).